Here is a 190-residue protein sequence, read N- to C-terminus: Probable nicotinate-nucleotide adenylyltransferase (190 aa).

This sequence belongs to the NadD family.

It carries out the reaction nicotinate beta-D-ribonucleotide + ATP + H(+) = deamido-NAD(+) + diphosphate. It functions in the pathway cofactor biosynthesis; NAD(+) biosynthesis; deamido-NAD(+) from nicotinate D-ribonucleotide: step 1/1. Catalyzes the reversible adenylation of nicotinate mononucleotide (NaMN) to nicotinic acid adenine dinucleotide (NaAD). This chain is Probable nicotinate-nucleotide adenylyltransferase, found in Frankia casuarinae (strain DSM 45818 / CECT 9043 / HFP020203 / CcI3).